A 704-amino-acid chain; its full sequence is Polyribonucleotide nucleotidyltransferase 4 (704 aa).

Residues Asp483 and Asp489 each coordinate Mg(2+). Positions Pro550 to Ile609 constitute a KH domain. The region spanning Gly619–Lys687 is the S1 motif domain.

Belongs to the polyribonucleotide nucleotidyltransferase family. Requires Mg(2+) as cofactor.

Its subcellular location is the cytoplasm. The enzyme catalyses RNA(n+1) + phosphate = RNA(n) + a ribonucleoside 5'-diphosphate. Functionally, involved in mRNA degradation. Catalyzes the phosphorolysis of single-stranded polyribonucleotides processively in the 3'- to 5'-direction. In Alkaliphilus metalliredigens (strain QYMF), this protein is Polyribonucleotide nucleotidyltransferase 4.